Here is a 204-residue protein sequence, read N- to C-terminus: Recombination protein RecR (204 aa).

The C4-type zinc-finger motif lies at cysteine 57–cysteine 72. The region spanning glutamate 80–proline 181 is the Toprim domain.

This sequence belongs to the RecR family.

May play a role in DNA repair. It seems to be involved in an RecBC-independent recombinational process of DNA repair. It may act with RecF and RecO. This chain is Recombination protein RecR, found in Bdellovibrio bacteriovorus (strain ATCC 15356 / DSM 50701 / NCIMB 9529 / HD100).